The chain runs to 443 residues: D-lactate dehydrogenase (443 aa).

The Extracellular segment spans residues 1–182 (MSWIDELSKI…GGKTIKNSSG (182 aa)). In terms of domain architecture, FAD-binding PCMH-type spans 32 to 209 (RAAENFVVVK…TKATIRLFPQ (178 aa)). Residues 183–203 (YSLLHLLVGSEGTLAVITKAT) traverse the membrane as a helical segment. Residues 204 to 383 (IRLFPQMRDM…WEKSYFEFRK (180 aa)) lie on the Cytoplasmic side of the membrane. Residues 384-404 (SLLSLAVSLGGVISGEHGIGA) traverse the membrane as a helical segment. Residues 405–443 (VKLSELEELFPEQFELMRQIKLLFDPKNILNPGKVVRKL) are Extracellular-facing.

This sequence belongs to the FAD-binding oxidoreductase/transferase type 4 family. It depends on FAD as a cofactor. Requires Zn(2+) as cofactor.

It localises to the cell membrane. It carries out the reaction (R)-lactate + A = pyruvate + AH2. Its function is as follows. Catalyzes the dehydrogenation of (R)-lactate (D-lactate) to pyruvate. Is likely involved in the utilization of D-lactate as a sole source for both carbon and electrons for dissimilatory sulfate reduction. Cannot use L-lactate as substrate, and NAD(+), horse cytochrome c, methylene blue or dimethylnaphthoquinone as acceptors. Active in vitro with artificial electron acceptors such as 2,6-dichlorophenolindophenol (DCPIP); the physiological acceptor is not known, but potential acceptors include cytochromes or quinones. The sequence is that of D-lactate dehydrogenase from Archaeoglobus fulgidus (strain ATCC 49558 / DSM 4304 / JCM 9628 / NBRC 100126 / VC-16).